The chain runs to 144 residues: Intraflagellar transport protein 25 homolog (144 aa).

N29, D32, and T37 together coordinate Ca(2+).

Belongs to the IFT25 family. As to quaternary structure, component of the IFT complex B, at least composed of IFT20, IFT22, IFT25, IFT27, IFT46, IFT52, TRAF3IP1/IFT54, IFT57, IFT74, IFT80, IFT81, and IFT88. Interacts with IFT27. Interacts with IFT88. Detected in placenta.

The protein resides in the cell projection. Its subcellular location is the cilium. In terms of biological role, component of the IFT complex B required for sonic hedgehog/SHH signaling. May mediate transport of SHH components: required for the export of SMO and PTCH1 receptors out of the cilium and the accumulation of GLI2 at the ciliary tip in response to activation of the SHH pathway, suggesting it is involved in the dynamic transport of SHH signaling molecules within the cilium. Not required for ciliary assembly. Its role in intraflagellar transport is mainly seen in tissues rich in ciliated cells such as kidney and testis. Essential for male fertility, spermiogenesis and sperm flagella formation. Plays a role in the early development of the kidney. May be involved in the regulation of ureteric bud initiation. This is Intraflagellar transport protein 25 homolog from Homo sapiens (Human).